Consider the following 219-residue polypeptide: Ribose-5-phosphate isomerase A (219 aa).

Substrate-binding positions include 28–31 (TGST), 81–84 (DGAD), and 94–97 (KGGG). Glutamate 103 functions as the Proton acceptor in the catalytic mechanism. Lysine 121 lines the substrate pocket.

It belongs to the ribose 5-phosphate isomerase family. Homodimer.

The enzyme catalyses aldehydo-D-ribose 5-phosphate = D-ribulose 5-phosphate. It participates in carbohydrate degradation; pentose phosphate pathway; D-ribose 5-phosphate from D-ribulose 5-phosphate (non-oxidative stage): step 1/1. Catalyzes the reversible conversion of ribose-5-phosphate to ribulose 5-phosphate. The protein is Ribose-5-phosphate isomerase A of Erwinia tasmaniensis (strain DSM 17950 / CFBP 7177 / CIP 109463 / NCPPB 4357 / Et1/99).